A 266-amino-acid polypeptide reads, in one-letter code: Enterotoxin type C-1 (266 aa).

Residues 1 to 27 (MNKSRFISCVILIFALILVLFTPNVLA) form the signal peptide. Cysteines 120 and 137 form a disulfide.

This sequence belongs to the staphylococcal/streptococcal toxin family. As to quaternary structure, interacts with host MHC class II molecules composed of alpha/HLA-DRA and beta/HLA-DRB1 chains.

The protein localises to the secreted. Functionally, staphylococcal enterotoxin that activates the host immune system by binding as unprocessed molecules to major histocompatibility (MHC) complex class II and T-cell receptor (TCR) molecules. In turn, this ternary complex activates a large number of T-lymphocytes initiating a systemic release of pro-inflammatory cytokines. Inhibits SEC1-mediated T-cell activation in the absence of MHC class II by competing with SEC1 for binding to the host TCR. Also causes the intoxication staphylococcal food poisoning syndrome. The sequence is that of Enterotoxin type C-1 (entC1) from Staphylococcus aureus.